The following is a 500-amino-acid chain: MNFFPWLTIIVILPIFAGSIILFLPHRGNRVIRWYTICICILELLLTTYAFCYHFQLDDPLIQLVEDFKWIDFFDFHWRLGIDGLSIGPILLTGFITTLATLAAWPVTRDSRLFHFLMLAMYSGQIGLFASRDLLLFFIMWELELIPVYLLLSMWGGKKRLYSATKFILYTAGGSVFLLMGVLGVGLYGSTEPTLNFATLVNQSYPVALEIILYIGFFIAFAVKSPIIPLHTWLPDTHGEAHYSTCMLLAGILLKMGAYGLIRINMELLSHAHSIFSPWLVIVGTIQIIYAASTSLGQRNLKKRIAYSSVSHMGFILIGIGSINDTGLNGAILQIVSHGFIGAALFFLAGTSYDRIRLVYLDEMGGIAIPMPKIFTMFSSFSMASLALPGMSGFVAEFIVFFGIITSQKYLLISKLGITFVMAIGIILTPIYSLSMLRQMFYGYKLFNAPNSYVFDSGPRELFVSIAIFIPVIGIGMYPDFVLSLSVDKVEVLLSNFVYR.

A run of 15 helical transmembrane segments spans residues 3 to 23, 37 to 57, 87 to 107, 113 to 130, 134 to 154, 167 to 187, 208 to 228, 242 to 262, 272 to 292, 305 to 325, 330 to 350, 364 to 384, 386 to 406, 411 to 431, and 462 to 482; these read FFPWLTIIVILPIFAGSIILF, ICICILELLLTTYAFCYHFQL, IGPILLTGFITTLATLAAWPV, LFHFLMLAMYSGQIGLFA, LLLFFIMWELELIPVYLLLSM, FILYTAGGSVFLLMGVLGVGL, ALEIILYIGFFIAFAVKSPII, HYSTCMLLAGILLKMGAYGLI, AHSIFSPWLVIVGTIQIIYAA, IAYSSVSHMGFILIGIGSIND, GAILQIVSHGFIGAALFFLAG, MGGIAIPMPKIFTMFSSFSMA, LALPGMSGFVAEFIVFFGIIT, LLISKLGITFVMAIGIILTPI, and LFVSIAIFIPVIGIGMYPDFV.

This sequence belongs to the complex I subunit 4 family.

It localises to the plastid. The protein resides in the chloroplast thylakoid membrane. It carries out the reaction a plastoquinone + NADH + (n+1) H(+)(in) = a plastoquinol + NAD(+) + n H(+)(out). It catalyses the reaction a plastoquinone + NADPH + (n+1) H(+)(in) = a plastoquinol + NADP(+) + n H(+)(out). The chain is NAD(P)H-quinone oxidoreductase chain 4, chloroplastic from Daucus carota (Wild carrot).